A 204-amino-acid polypeptide reads, in one-letter code: 3,4-dihydroxy-2-butanone 4-phosphate synthase (204 aa).

Mg(2+) is bound at residue Glu30. Asp34 is a D-ribulose 5-phosphate binding site. Cys59 is modified (S-glutathionyl cysteine). Residues Thr85 and 142–146 (RRGHT) contribute to the D-ribulose 5-phosphate site. Residue His145 coordinates Mg(2+).

Homodimer. Requires Mg(2+) as cofactor. It depends on Mn(2+) as a cofactor. Post-translationally, S-glutathionylation is reversible and dependent on a glutaredoxin.

It catalyses the reaction D-ribulose 5-phosphate = (2S)-2-hydroxy-3-oxobutyl phosphate + formate + H(+). Its pathway is cofactor biosynthesis; riboflavin biosynthesis; 2-hydroxy-3-oxobutyl phosphate from D-ribulose 5-phosphate: step 1/1. Functionally, catalyzes the conversion of D-ribulose 5-phosphate to formate and 3,4-dihydroxy-2-butanone 4-phosphate. The chain is 3,4-dihydroxy-2-butanone 4-phosphate synthase (RIB3) from Candida albicans (strain SC5314 / ATCC MYA-2876) (Yeast).